We begin with the raw amino-acid sequence, 198 residues long: MRIGVIAIQGDVSEHVESLERALAERGATAEIVNIKHKGIVPTCDGLVFPGGESTTLGRLILREGIDAEIKDAKEQGIPIMGTCAGLILTAKAGDSQVEKTHQHLLGLMDIKVNRNAFGRQFQSFEVGLEISFLDSPYNAVFIRAPAITEAGEGVKVLASIDGKIVAAEQDNVLAFAFHPELTDDMRVHQYFLDKLFN.

52–54 (GES) provides a ligand contact to L-glutamine. The active-site Nucleophile is the cysteine 84. L-glutamine is bound by residues arginine 115 and 143 to 144 (IR). Catalysis depends on charge relay system residues histidine 179 and glutamate 181.

It belongs to the glutaminase PdxT/SNO family. In the presence of PdxS, forms a dodecamer of heterodimers. Only shows activity in the heterodimer.

It carries out the reaction aldehydo-D-ribose 5-phosphate + D-glyceraldehyde 3-phosphate + L-glutamine = pyridoxal 5'-phosphate + L-glutamate + phosphate + 3 H2O + H(+). It catalyses the reaction L-glutamine + H2O = L-glutamate + NH4(+). Its pathway is cofactor biosynthesis; pyridoxal 5'-phosphate biosynthesis. Its function is as follows. Catalyzes the hydrolysis of glutamine to glutamate and ammonia as part of the biosynthesis of pyridoxal 5'-phosphate. The resulting ammonia molecule is channeled to the active site of PdxS. The protein is Pyridoxal 5'-phosphate synthase subunit PdxT of Methanococcoides burtonii (strain DSM 6242 / NBRC 107633 / OCM 468 / ACE-M).